A 140-amino-acid chain; its full sequence is Small ribosomal subunit protein uS8c (140 aa).

The protein belongs to the universal ribosomal protein uS8 family. Part of the 30S ribosomal subunit.

The protein resides in the plastid. It localises to the chloroplast. One of the primary rRNA binding proteins, it binds directly to 16S rRNA central domain where it helps coordinate assembly of the platform of the 30S subunit. The polypeptide is Small ribosomal subunit protein uS8c (rps8) (Euglena gracilis).